Reading from the N-terminus, the 88-residue chain is MIASSIKAEVVKANARAANDTGSPEVQVALLTARINELTPHFKTHAKDHHGRRGLLRMVSRRRKLLDYLKAKDADRYTALIAKLGLRK.

Belongs to the universal ribosomal protein uS15 family. In terms of assembly, part of the 30S ribosomal subunit. Forms a bridge to the 50S subunit in the 70S ribosome, contacting the 23S rRNA.

Functionally, one of the primary rRNA binding proteins, it binds directly to 16S rRNA where it helps nucleate assembly of the platform of the 30S subunit by binding and bridging several RNA helices of the 16S rRNA. Forms an intersubunit bridge (bridge B4) with the 23S rRNA of the 50S subunit in the ribosome. The polypeptide is Small ribosomal subunit protein uS15 (Verminephrobacter eiseniae (strain EF01-2)).